Here is a 285-residue protein sequence, read N- to C-terminus: N(G),N(G)-dimethylarginine dimethylaminohydrolase 1 (285 aa).

Position 2 is an N-acetylalanine (Ala-2). Leu-30 contacts substrate. Position 33 is a phosphoserine (Ser-33). The substrate site is built by Asp-73, Glu-78, Asp-79, Arg-98, and Arg-145. His-173 functions as the Proton donor in the catalytic mechanism. Residue Cys-222 is modified to S-nitrosocysteine. Val-268 is a substrate binding site. An S-nitrosocysteine modification is found at Cys-274. Catalysis depends on Cys-274, which acts as the Nucleophile. Cys-274 provides a ligand contact to Zn(2+).

Belongs to the DDAH family. Monomer. As to expression, detected in red blood cells (at protein level). Widely distributed, high amounts found in kidney, brain, aorta and pancreas.

The catalysed reaction is N(omega),N(omega)-dimethyl-L-arginine + H2O = dimethylamine + L-citrulline. It catalyses the reaction N(omega)-methyl-L-arginine + H2O = L-citrulline + methylamine. With respect to regulation, inhibited by zinc ions. Its function is as follows. Hydrolyzes N(G),N(G)-dimethyl-L-arginine (ADMA) and N(G)-monomethyl-L-arginine (MMA) which act as inhibitors of NOS. Has therefore a role in the regulation of nitric oxide generation. The protein is N(G),N(G)-dimethylarginine dimethylaminohydrolase 1 (Ddah1) of Rattus norvegicus (Rat).